We begin with the raw amino-acid sequence, 88 residues long: Small ribosomal subunit protein bS20 (88 aa).

The segment at 1–20 is disordered; that stretch reads MPNIKSAIKRTKTNNERRAH.

This sequence belongs to the bacterial ribosomal protein bS20 family.

Binds directly to 16S ribosomal RNA. This is Small ribosomal subunit protein bS20 from Bacillus velezensis (strain DSM 23117 / BGSC 10A6 / LMG 26770 / FZB42) (Bacillus amyloliquefaciens subsp. plantarum).